We begin with the raw amino-acid sequence, 309 residues long: Probable RuBisCO transcriptional regulator (309 aa).

The HTH lysR-type domain maps to 5–62 (FTLQQLRILKAIATEKSFTRAAEVLFVSQPSLSKQIKTLESRLNISLLNRENNIVSLT). The segment at residues 22–41 (FTRAAEVLFVSQPSLSKQIK) is a DNA-binding region (H-T-H motif).

It belongs to the LysR transcriptional regulatory family.

The protein resides in the plastid. It localises to the chloroplast. In terms of biological role, trans-acting transcriptional regulator of RuBisCO genes (rbcL and rbcS) expression. The protein is Probable RuBisCO transcriptional regulator (rbcR) of Trieres chinensis (Marine centric diatom).